The chain runs to 1228 residues: DNA-directed RNA polymerase subunit beta (1228 aa).

A disordered region spans residues 1175–1204 (ESVDEDEQPQGLGAFEIGGDEIEEDKEDDK). The segment covering 1192-1202 (GGDEIEEDKED) has biased composition (acidic residues).

It belongs to the RNA polymerase beta chain family. In terms of assembly, the RNAP catalytic core consists of 2 alpha, 1 beta, 1 beta' and 1 omega subunit. When a sigma factor is associated with the core the holoenzyme is formed, which can initiate transcription.

The enzyme catalyses RNA(n) + a ribonucleoside 5'-triphosphate = RNA(n+1) + diphosphate. Functionally, DNA-dependent RNA polymerase catalyzes the transcription of DNA into RNA using the four ribonucleoside triphosphates as substrates. The sequence is that of DNA-directed RNA polymerase subunit beta from Caldicellulosiruptor bescii (strain ATCC BAA-1888 / DSM 6725 / KCTC 15123 / Z-1320) (Anaerocellum thermophilum).